A 181-amino-acid polypeptide reads, in one-letter code: Oligoribonuclease (181 aa).

Positions 8–171 constitute an Exonuclease domain; the sequence is LIWIDLEMTG…DDIRESVAEL (164 aa). Tyr129 is an active-site residue.

This sequence belongs to the oligoribonuclease family.

Its subcellular location is the cytoplasm. 3'-to-5' exoribonuclease specific for small oligoribonucleotides. The protein is Oligoribonuclease of Enterobacter sp. (strain 638).